The sequence spans 438 residues: Coenzyme A disulfide reductase (438 aa).

Residue 8 to 33 (GAVAGGATCASQIRRLDKESDIIIFE) participates in FAD binding. The substrate site is built by Thr15, Gln19, Arg22, Ser39, and Asn42. The active-site Nucleophile is Cys43. Cys43 serves as the catalytic Redox-active. Lys71 contributes to the substrate binding site. Residue 151 to 166 (VLVVGAGYVSLEVLEN) coordinates NADP(+). 267 to 277 (TNVPNIYAIGD) is a binding site for FAD. His299 serves as a coordination point for substrate. Tyr419 contributes to the FAD binding site. Substrate is bound at residue Lys427.

This sequence belongs to the class-III pyridine nucleotide-disulfide oxidoreductase family. In terms of assembly, homodimer. Requires FAD as cofactor.

The catalysed reaction is NADP(+) + 2 CoA = CoA-disulfide + NADPH + H(+). Functionally, catalyzes specifically the NADPH-dependent reduction of coenzyme A disulfide. The protein is Coenzyme A disulfide reductase of Staphylococcus aureus (strain MSSA476).